We begin with the raw amino-acid sequence, 93 residues long: Protein salt-induced and EIN3/EIL1-dependent 1 (93 aa).

The segment covering 23–36 (SSLLTESSSSSLCS) has biased composition (low complexity). Positions 23-46 (SSLLTESSSSSLCSEEAEGGGGEA) are disordered.

With respect to regulation, triggered by EIN3. Involved in ethylene-dependent salt stress responses by reducing reactive oxygen species (ROS) accumulation. The polypeptide is Protein salt-induced and EIN3/EIL1-dependent 1 (Arabidopsis thaliana (Mouse-ear cress)).